Reading from the N-terminus, the 1485-residue chain is Chromosome partition protein MukB (1485 aa).

Residue 34–41 (GGNGAGKS) coordinates ATP. Coiled-coil stretches lie at residues 337 to 480 (LNLV…QAYQ) and 509 to 605 (QHLA…PVWL). The flexible hinge stretch occupies residues 666 to 783 (PSGAEDARLI…EVPLFGRAAR (118 aa)). Coiled-coil stretches lie at residues 835–915 (EAEI…IQQH) and 977–1116 (GMLT…AKAG).

This sequence belongs to the SMC family. MukB subfamily. In terms of assembly, homodimerization via its hinge domain. Binds to DNA via its C-terminal region. Interacts, and probably forms a ternary complex, with MukE and MukF via its C-terminal region. The complex formation is stimulated by calcium or magnesium. Interacts with tubulin-related protein FtsZ.

It localises to the cytoplasm. It is found in the nucleoid. Functionally, plays a central role in chromosome condensation, segregation and cell cycle progression. Functions as a homodimer, which is essential for chromosome partition. Involved in negative DNA supercoiling in vivo, and by this means organize and compact chromosomes. May achieve or facilitate chromosome segregation by condensation DNA from both sides of a centrally located replisome during cell division. The chain is Chromosome partition protein MukB from Yersinia pseudotuberculosis serotype O:3 (strain YPIII).